The following is a 245-amino-acid chain: tRNA (guanine-N(1)-)-methyltransferase (245 aa).

Residues glycine 111 and 131–136 contribute to the S-adenosyl-L-methionine site; that span reads MGDYVL.

It belongs to the RNA methyltransferase TrmD family. As to quaternary structure, homodimer.

The protein localises to the cytoplasm. It carries out the reaction guanosine(37) in tRNA + S-adenosyl-L-methionine = N(1)-methylguanosine(37) in tRNA + S-adenosyl-L-homocysteine + H(+). In terms of biological role, specifically methylates guanosine-37 in various tRNAs. This chain is tRNA (guanine-N(1)-)-methyltransferase, found in Staphylococcus epidermidis (strain ATCC 35984 / DSM 28319 / BCRC 17069 / CCUG 31568 / BM 3577 / RP62A).